The primary structure comprises 319 residues: Acetyl esterase (319 aa).

Positions 91–93 match the Involved in the stabilization of the negatively charged intermediate by the formation of the oxyanion hole motif; sequence HGG. Residues S165, D262, and H292 contribute to the active site.

Belongs to the 'GDXG' lipolytic enzyme family. Homodimer. Interacts with MalT and MelA.

The protein resides in the cytoplasm. In terms of biological role, displays esterase activity towards short chain fatty esters (acyl chain length of up to 8 carbons). Able to hydrolyze triacetylglycerol (triacetin) and tributyrylglycerol (tributyrin), but not trioleylglycerol (triolein) or cholesterol oleate. Negatively regulates MalT activity by antagonizing maltotriose binding. Inhibits MelA galactosidase activity. This Shigella flexneri serotype 5b (strain 8401) protein is Acetyl esterase.